A 1332-amino-acid polypeptide reads, in one-letter code: Xanthine dehydrogenase/oxidase (1332 aa).

Residues 4-91 form the 2Fe-2S ferredoxin-type domain; the sequence is DELVFFVNGK…HVAVTTVEGI (88 aa). [2Fe-2S] cluster contacts are provided by C43, C48, C51, C73, C113, C116, C148, and C150. The FAD-binding PCMH-type domain maps to 229–414; sequence FEGERVTWIQ…LSIEIPYSRE (186 aa). Residues 257-264, F337, 347-351, D360, L404, and K422 contribute to the FAD site; these read LVVGNTEI and SLGGN. A disulfide bridge links C535 with C992. 2 residues coordinate Mo-molybdopterin: Q767 and F798. Substrate-binding residues include E802 and R880. R912 contacts Mo-molybdopterin. Substrate-binding residues include F914 and T1010. A Mo-molybdopterin-binding site is contributed by A1079. The Proton acceptor role is filled by E1261.

It belongs to the xanthine dehydrogenase family. Homodimer. Interacts with BTN1A1. Requires [2Fe-2S] cluster as cofactor. FAD is required as a cofactor. Mo-molybdopterin serves as cofactor. In terms of processing, subject to partial proteolysis; this alters the enzyme from the dehydrogenase form (D) to the oxidase form (O). Contains sulfhydryl groups that are easily oxidized (in vitro); this alters the enzyme from the dehydrogenase form (D) to the oxidase form (O). As to expression, detected in milk (at protein level).

It localises to the cytoplasm. It is found in the peroxisome. The protein localises to the secreted. The catalysed reaction is xanthine + NAD(+) + H2O = urate + NADH + H(+). It carries out the reaction hypoxanthine + NAD(+) + H2O = xanthine + NADH + H(+). The enzyme catalyses xanthine + O2 + H2O = urate + H2O2. Its activity is regulated as follows. Can be converted from the dehydrogenase form (D) to the oxidase form (O) irreversibly by proteolysis or reversibly through the oxidation of sulfhydryl groups. Its function is as follows. Key enzyme in purine degradation. Catalyzes the oxidation of hypoxanthine to xanthine. Catalyzes the oxidation of xanthine to uric acid. Contributes to the generation of reactive oxygen species. This is Xanthine dehydrogenase/oxidase (XDH) from Bos taurus (Bovine).